The sequence spans 380 residues: MTPTRKINPLMKLINHSFIDLPTPSNISTWWNFGSLLGACLILQITTGLFLAMHYSPDASTAFSSIAHITRDVNYGWIIRYLHANGASMLFICLFLHVGRGLYYGSFLYLETWNIGIILLLTTMATAFMGYVLPWGQMSFWGATVITNLLSAIPYIGTDLVQWVWGGYSVDSPTLTRFFTLHFILPFIITALTTLHLLFLHETGSNNPLGITSHSDKITFHPYYTTKDILGLFLFLLALMVLTLFSPDLLGDPDNYTLANPLITPPHIKPEWYFLFAYTILRSVPNKLGGVLALLLSILILAVIPILHTSKQQSMMFRPLSQLLYWLLATDLLILTWIGGQPVSYPFITIGQVASVLYFTTILILMPIISLIENKMLEWA.

The next 4 membrane-spanning stretches (helical) occupy residues 33–53, 77–98, 113–133, and 178–198; these read FGSL…FLAM, WIIR…FLHV, WNIG…GYVL, and FFTL…LHLL. Heme b-binding residues include histidine 83 and histidine 97. Residues histidine 182 and histidine 196 each coordinate heme b. Histidine 201 is a binding site for a ubiquinone. The next 4 membrane-spanning stretches (helical) occupy residues 226 to 246, 288 to 308, 320 to 340, and 347 to 367; these read TKDI…TLFS, LGGV…PILH, LSQL…WIGG, and FITI…ILMP.

This sequence belongs to the cytochrome b family. As to quaternary structure, the cytochrome bc1 complex contains 11 subunits: 3 respiratory subunits (MT-CYB, CYC1 and UQCRFS1), 2 core proteins (UQCRC1 and UQCRC2) and 6 low-molecular weight proteins (UQCRH/QCR6, UQCRB/QCR7, UQCRQ/QCR8, UQCR10/QCR9, UQCR11/QCR10 and a cleavage product of UQCRFS1). This cytochrome bc1 complex then forms a dimer. Requires heme b as cofactor.

It localises to the mitochondrion inner membrane. Functionally, component of the ubiquinol-cytochrome c reductase complex (complex III or cytochrome b-c1 complex) that is part of the mitochondrial respiratory chain. The b-c1 complex mediates electron transfer from ubiquinol to cytochrome c. Contributes to the generation of a proton gradient across the mitochondrial membrane that is then used for ATP synthesis. This is Cytochrome b (MT-CYB) from Pan paniscus (Pygmy chimpanzee).